We begin with the raw amino-acid sequence, 293 residues long: ATP phosphoribosyltransferase (293 aa).

It belongs to the ATP phosphoribosyltransferase family. Long subfamily. Requires Mg(2+) as cofactor.

The protein localises to the cytoplasm. It catalyses the reaction 1-(5-phospho-beta-D-ribosyl)-ATP + diphosphate = 5-phospho-alpha-D-ribose 1-diphosphate + ATP. The protein operates within amino-acid biosynthesis; L-histidine biosynthesis; L-histidine from 5-phospho-alpha-D-ribose 1-diphosphate: step 1/9. Feedback inhibited by histidine. Functionally, catalyzes the condensation of ATP and 5-phosphoribose 1-diphosphate to form N'-(5'-phosphoribosyl)-ATP (PR-ATP). Has a crucial role in the pathway because the rate of histidine biosynthesis seems to be controlled primarily by regulation of HisG enzymatic activity. The protein is ATP phosphoribosyltransferase of Solidesulfovibrio magneticus (strain ATCC 700980 / DSM 13731 / RS-1) (Desulfovibrio magneticus).